A 314-amino-acid chain; its full sequence is Small ribosomal subunit protein uS2c (314 aa).

Belongs to the universal ribosomal protein uS2 family.

Its subcellular location is the plastid. The protein localises to the chloroplast. This chain is Small ribosomal subunit protein uS2c (rps2), found in Stigeoclonium helveticum (Green alga).